The chain runs to 292 residues: 33 kDa chaperonin (292 aa).

Disulfide bonds link Cys-230–Cys-232 and Cys-263–Cys-266.

It belongs to the HSP33 family. In terms of processing, under oxidizing conditions two disulfide bonds are formed involving the reactive cysteines. Under reducing conditions zinc is bound to the reactive cysteines and the protein is inactive.

The protein localises to the cytoplasm. Its function is as follows. Redox regulated molecular chaperone. Protects both thermally unfolding and oxidatively damaged proteins from irreversible aggregation. Plays an important role in the bacterial defense system toward oxidative stress. This chain is 33 kDa chaperonin, found in Cronobacter sakazakii (strain ATCC BAA-894) (Enterobacter sakazakii).